A 201-amino-acid polypeptide reads, in one-letter code: Large ribosomal subunit protein uL4 (201 aa).

The tract at residues 44 to 71 (RAQKTRAEVTGSGKKPWRQKGTGRARSG) is disordered.

The protein belongs to the universal ribosomal protein uL4 family. In terms of assembly, part of the 50S ribosomal subunit.

One of the primary rRNA binding proteins, this protein initially binds near the 5'-end of the 23S rRNA. It is important during the early stages of 50S assembly. It makes multiple contacts with different domains of the 23S rRNA in the assembled 50S subunit and ribosome. Functionally, forms part of the polypeptide exit tunnel. The chain is Large ribosomal subunit protein uL4 from Escherichia fergusonii (strain ATCC 35469 / DSM 13698 / CCUG 18766 / IAM 14443 / JCM 21226 / LMG 7866 / NBRC 102419 / NCTC 12128 / CDC 0568-73).